A 420-amino-acid chain; its full sequence is UDP-glucuronic acid decarboxylase 1 (420 aa).

Met1 is modified (N-acetylmethionine). The Cytoplasmic segment spans residues 1–19; sequence MVSKGLLRLVSSVNRRRMK. Residues 20-40 form a helical; Signal-anchor for type II membrane protein membrane-spanning segment; it reads LLLGIALFAYAASVWGNFVNM. The Lumenal segment spans residues 41–420; sequence RSIQENGELK…RVKKGRTRHS (380 aa). A Phosphothreonine modification is found at Thr94. Gly98, Phe99, Val100, Asp119, Asn120, Phe122, Thr123, Gly124, Asp144, and Val145 together coordinate NAD(+). UDP-alpha-D-glucuronate is bound by residues Leu149 and Tyr150. Leu159 and Ser161 together coordinate NAD(+). A UDP-alpha-D-glucuronate-binding site is contributed by Lys177. Thr178 contacts NAD(+). 4 residues coordinate UDP-alpha-D-glucuronate: Asn185, Gly188, Lys191, and Arg192. Ala200, Tyr231, and Lys235 together coordinate NAD(+). Tyr231 serves as the catalytic Proton acceptor. UDP-alpha-D-glucuronate is bound by residues Tyr245, Gln248, and Glu249. Residues Thr261, His267, and Arg272 each contribute to the NAD(+) site. Residue Asn316 is glycosylated (N-linked (GlcNAc...) asparagine).

This sequence belongs to the NAD(P)-dependent epimerase/dehydratase family. UDP-glucuronic acid decarboxylase subfamily. Homodimer and homotetramer. Interacts with AKT1. It depends on NAD(+) as a cofactor.

Its subcellular location is the golgi apparatus. It localises to the golgi stack membrane. It catalyses the reaction UDP-alpha-D-glucuronate + H(+) = UDP-alpha-D-xylose + CO2. It participates in nucleotide-sugar biosynthesis; UDP-alpha-D-xylose biosynthesis; UDP-alpha-D-xylose from UDP-alpha-D-glucuronate: step 1/1. Catalyzes the NAD-dependent decarboxylation of UDP-glucuronic acid to UDP-xylose. Necessary for the biosynthesis of the core tetrasaccharide in glycosaminoglycan biosynthesis. The sequence is that of UDP-glucuronic acid decarboxylase 1 (Uxs1) from Mus musculus (Mouse).